A 323-amino-acid chain; its full sequence is Ferrochelatase (323 aa).

Fe cation is bound by residues H196 and E277.

The protein belongs to the ferrochelatase family.

The protein localises to the cytoplasm. It catalyses the reaction heme b + 2 H(+) = protoporphyrin IX + Fe(2+). The protein operates within porphyrin-containing compound metabolism; protoheme biosynthesis; protoheme from protoporphyrin-IX: step 1/1. Functionally, catalyzes the ferrous insertion into protoporphyrin IX. This Haemophilus influenzae (strain 86-028NP) protein is Ferrochelatase.